We begin with the raw amino-acid sequence, 389 residues long: Dual-specificity RNA methyltransferase RlmN (389 aa).

Catalysis depends on E110, which acts as the Proton acceptor. A Radical SAM core domain is found at 116-355; that stretch reads EKDRATLCVS…TIVRKTRGDD (240 aa). C123 and C360 form a disulfide bridge. [4Fe-4S] cluster contacts are provided by C130, C134, and C137. Residues 184-185, S216, 238-240, and N317 each bind S-adenosyl-L-methionine; these read GE and SLH. The active-site S-methylcysteine intermediate is C360.

The protein belongs to the radical SAM superfamily. RlmN family. It depends on [4Fe-4S] cluster as a cofactor.

Its subcellular location is the cytoplasm. The catalysed reaction is adenosine(2503) in 23S rRNA + 2 reduced [2Fe-2S]-[ferredoxin] + 2 S-adenosyl-L-methionine = 2-methyladenosine(2503) in 23S rRNA + 5'-deoxyadenosine + L-methionine + 2 oxidized [2Fe-2S]-[ferredoxin] + S-adenosyl-L-homocysteine. The enzyme catalyses adenosine(37) in tRNA + 2 reduced [2Fe-2S]-[ferredoxin] + 2 S-adenosyl-L-methionine = 2-methyladenosine(37) in tRNA + 5'-deoxyadenosine + L-methionine + 2 oxidized [2Fe-2S]-[ferredoxin] + S-adenosyl-L-homocysteine. Specifically methylates position 2 of adenine 2503 in 23S rRNA and position 2 of adenine 37 in tRNAs. m2A2503 modification seems to play a crucial role in the proofreading step occurring at the peptidyl transferase center and thus would serve to optimize ribosomal fidelity. This is Dual-specificity RNA methyltransferase RlmN from Erwinia tasmaniensis (strain DSM 17950 / CFBP 7177 / CIP 109463 / NCPPB 4357 / Et1/99).